The primary structure comprises 311 residues: Putative prophage capsid protein YqbE (311 aa).

It belongs to the encapsulin family. Family 3 subfamily.

Functionally, possibly a prophage capsid protein. This chain is Putative prophage capsid protein YqbE (yqbE), found in Bacillus subtilis (strain 168).